The sequence spans 234 residues: Ribonuclease 3 (234 aa).

The region spanning 13–136 is the RNase III domain; sequence YITLEKALGY…LMAGVYLEAG (124 aa). Glutamate 49 contributes to the Mg(2+) binding site. Aspartate 53 is an active-site residue. Positions 122 and 125 each coordinate Mg(2+). Glutamate 125 is an active-site residue. The DRBM domain occupies 163-232; the sequence is DYKTALQELT…AYQALQKLKG (70 aa).

This sequence belongs to the ribonuclease III family. As to quaternary structure, homodimer. Mg(2+) serves as cofactor.

The protein localises to the cytoplasm. It catalyses the reaction Endonucleolytic cleavage to 5'-phosphomonoester.. In terms of biological role, digests double-stranded RNA. Involved in the processing of primary rRNA transcript to yield the immediate precursors to the large and small rRNAs (23S and 16S). Processes some mRNAs, and tRNAs when they are encoded in the rRNA operon. Processes pre-crRNA and tracrRNA of type II CRISPR loci if present in the organism. The protein is Ribonuclease 3 of Helicobacter acinonychis (strain Sheeba).